A 403-amino-acid polypeptide reads, in one-letter code: S-adenosylmethionine synthase (403 aa).

Residue His15 coordinates ATP. Asp17 contributes to the Mg(2+) binding site. Glu43 serves as a coordination point for K(+). Residues Glu56 and Gln99 each coordinate L-methionine. The tract at residues 99-109 (QSPHIAQGVDR) is flexible loop. Residues 166–168 (DAK), 232–233 (KF), Asp241, 247–248 (RK), Ala264, and Lys268 each bind ATP. Asp241 lines the L-methionine pocket. Lys272 lines the L-methionine pocket.

The protein belongs to the AdoMet synthase family. As to quaternary structure, homotetramer; dimer of dimers. The cofactor is Mg(2+). It depends on K(+) as a cofactor.

Its subcellular location is the cytoplasm. The enzyme catalyses L-methionine + ATP + H2O = S-adenosyl-L-methionine + phosphate + diphosphate. It participates in amino-acid biosynthesis; S-adenosyl-L-methionine biosynthesis; S-adenosyl-L-methionine from L-methionine: step 1/1. Catalyzes the formation of S-adenosylmethionine (AdoMet) from methionine and ATP. The overall synthetic reaction is composed of two sequential steps, AdoMet formation and the subsequent tripolyphosphate hydrolysis which occurs prior to release of AdoMet from the enzyme. This is S-adenosylmethionine synthase from Stenotrophomonas maltophilia (strain K279a).